Here is a 277-residue protein sequence, read N- to C-terminus: Zinc transporter ZupT (277 aa).

8 helical membrane passes run 7–27 (VLLAFGLTLFAGLATGVGSAI), 38–58 (FLAVALGFSAGVMIYVSFVEI), 73–93 (VLASWYTVAAFFSGALLIAVI), 133–155 (AGVLAAVAIGIHNFPEGLAAFSA), 165–187 (AIAVAIAIHNIPEGMAVSVPIYY), 196–216 (FLYSFLSGVSEPIGALVGYVV), 220–240 (FFTPMVFGLLFASVAGIMVYI), and 257–277 (LCILGVFSGMGVMALSLLLFL). Positions 145 and 148 each coordinate Fe(2+). 2 residues coordinate Zn(2+): glutamate 148 and histidine 173. Residues asparagine 174, glutamate 177, and glutamate 206 each contribute to the Fe(2+) site. Position 177 (glutamate 177) interacts with Zn(2+).

It belongs to the ZIP transporter (TC 2.A.5) family. ZupT subfamily.

The protein resides in the cell inner membrane. The catalysed reaction is Zn(2+)(in) = Zn(2+)(out). Its function is as follows. Mediates zinc uptake. May also transport other divalent cations. In Nitratidesulfovibrio vulgaris (strain ATCC 29579 / DSM 644 / CCUG 34227 / NCIMB 8303 / VKM B-1760 / Hildenborough) (Desulfovibrio vulgaris), this protein is Zinc transporter ZupT.